Here is a 294-residue protein sequence, read N- to C-terminus: MTKLKKVMISLVAATLLLLAGCGSSAVVKTDAGNVTQDELYEAMKTTYGNEVVQQLTFKKILEDKYTVTEKEVNAEYKKYEEQYGDSFESTLSSNNLTKTSFKENLEYNLLVQKATEANMNVSESKLKTYYKTWEPNITVRHILVDDEATAKEIQTKLKNGEKFADLAKEYSTDTATSTNGGLLDPFGPGEMDETFEKAAYALKNKDDVSGIVKSTYGYHLIQLVKKTEKGTYAKEKANVKAAYIKSQLTSENMTAALKKELKAANIDIKDSDLKDAFADYTSTSSSSSTSTSN.

Residues 1–21 (MTKLKKVMISLVAATLLLLAG) form the signal peptide. Cys-22 carries the N-palmitoyl cysteine lipid modification. Cys-22 carries the S-diacylglycerol cysteine lipid modification. The PpiC domain occupies 135-226 (EPNITVRHIL…YGYHLIQLVK (92 aa)).

It belongs to the PrsA family.

It is found in the cell membrane. It carries out the reaction [protein]-peptidylproline (omega=180) = [protein]-peptidylproline (omega=0). Its function is as follows. Plays a major role in protein secretion by helping the post-translocational extracellular folding of several secreted proteins. In Listeria innocua serovar 6a (strain ATCC BAA-680 / CLIP 11262), this protein is Foldase protein PrsA 1 (prsA1).